Consider the following 334-residue polypeptide: HTH-type transcriptional repressor PurR (334 aa).

The HTH lacI-type domain occupies 2 to 56 (ATIKDVAKMAGVSTTTVSHVINKTRFVAAETEKLVLQAIQELNYSPSAVARSLKV). Residues 4–23 (IKDVAKMAGVSTTTVSHVIN) constitute a DNA-binding region (H-T-H motif). A DNA-binding region spans residues 48 to 56 (SAVARSLKV). Residues Tyr73, Lys189, Thr191, Phe220, and Asp274 each coordinate hypoxanthine.

In terms of assembly, homodimer.

It functions in the pathway purine metabolism; purine nucleotide biosynthesis [regulation]. Its function is as follows. Is the main repressor of the genes involved in the de novo synthesis of purine nucleotides, regulating purB, purC, purEK, purF, purHD, purL, purMN and guaBA expression. PurR is allosterically activated to bind its cognate DNA by binding the purine corepressors, hypoxanthine or guanine, thereby effecting transcription repression. The sequence is that of HTH-type transcriptional repressor PurR from Pasteurella multocida (strain Pm70).